A 246-amino-acid chain; its full sequence is 3-deoxy-manno-octulosonate cytidylyltransferase (246 aa).

It belongs to the KdsB family.

It localises to the cytoplasm. The enzyme catalyses 3-deoxy-alpha-D-manno-oct-2-ulosonate + CTP = CMP-3-deoxy-beta-D-manno-octulosonate + diphosphate. Its pathway is nucleotide-sugar biosynthesis; CMP-3-deoxy-D-manno-octulosonate biosynthesis; CMP-3-deoxy-D-manno-octulosonate from 3-deoxy-D-manno-octulosonate and CTP: step 1/1. It functions in the pathway bacterial outer membrane biogenesis; lipopolysaccharide biosynthesis. Activates KDO (a required 8-carbon sugar) for incorporation into bacterial lipopolysaccharide in Gram-negative bacteria. The polypeptide is 3-deoxy-manno-octulosonate cytidylyltransferase (Rickettsia prowazekii (strain Madrid E)).